Here is a 182-residue protein sequence, read N- to C-terminus: UPF0397 protein BCA_2731 (182 aa).

A run of 5 helical transmembrane segments spans residues 9–29, 40–60, 71–91, 114–134, and 142–162; these read VVAI…GFSI, AILT…IGLI, WGIW…MGLI, ITGL…DIIV, and IVIQ…VLGL.

Belongs to the UPF0397 family.

The protein localises to the cell membrane. The sequence is that of UPF0397 protein BCA_2731 from Bacillus cereus (strain 03BB102).